A 447-amino-acid chain; its full sequence is UDP-N-acetylmuramoyl-L-alanyl-D-glutamate--2,6-diaminopimelate ligase (447 aa).

Residue Thr-21 coordinates UDP-N-acetyl-alpha-D-muramoyl-L-alanyl-D-glutamate. Position 74–80 (74–80 (GTNGKTT)) interacts with ATP. UDP-N-acetyl-alpha-D-muramoyl-L-alanyl-D-glutamate contacts are provided by residues 117 to 118 (TT), Ser-144, Gln-150, and Arg-152. Lys-184 carries the N6-carboxylysine modification. Meso-2,6-diaminopimelate is bound by residues Arg-340, 364–367 (DNPR), Gly-415, and Glu-419. The short motif at 364-367 (DNPR) is the Meso-diaminopimelate recognition motif element.

It belongs to the MurCDEF family. MurE subfamily. It depends on Mg(2+) as a cofactor. Carboxylation is probably crucial for Mg(2+) binding and, consequently, for the gamma-phosphate positioning of ATP.

It is found in the cytoplasm. It catalyses the reaction UDP-N-acetyl-alpha-D-muramoyl-L-alanyl-D-glutamate + meso-2,6-diaminopimelate + ATP = UDP-N-acetyl-alpha-D-muramoyl-L-alanyl-gamma-D-glutamyl-meso-2,6-diaminopimelate + ADP + phosphate + H(+). It participates in cell wall biogenesis; peptidoglycan biosynthesis. In terms of biological role, catalyzes the addition of meso-diaminopimelic acid to the nucleotide precursor UDP-N-acetylmuramoyl-L-alanyl-D-glutamate (UMAG) in the biosynthesis of bacterial cell-wall peptidoglycan. The protein is UDP-N-acetylmuramoyl-L-alanyl-D-glutamate--2,6-diaminopimelate ligase of Helicobacter pylori (strain J99 / ATCC 700824) (Campylobacter pylori J99).